The chain runs to 224 residues: Large ribosomal subunit protein uL3 (224 aa).

Glutamine 158 bears the N5-methylglutamine mark.

The protein belongs to the universal ribosomal protein uL3 family. In terms of assembly, part of the 50S ribosomal subunit. Forms a cluster with proteins L14 and L19. Post-translationally, methylated by PrmB.

Functionally, one of the primary rRNA binding proteins, it binds directly near the 3'-end of the 23S rRNA, where it nucleates assembly of the 50S subunit. The sequence is that of Large ribosomal subunit protein uL3 from Paracidovorax citrulli (strain AAC00-1) (Acidovorax citrulli).